Here is a 342-residue protein sequence, read N- to C-terminus: UDP-3-O-acylglucosamine N-acyltransferase (342 aa).

His-253 (proton acceptor) is an active-site residue.

Belongs to the transferase hexapeptide repeat family. LpxD subfamily. Homotrimer.

It catalyses the reaction a UDP-3-O-[(3R)-3-hydroxyacyl]-alpha-D-glucosamine + a (3R)-hydroxyacyl-[ACP] = a UDP-2-N,3-O-bis[(3R)-3-hydroxyacyl]-alpha-D-glucosamine + holo-[ACP] + H(+). It functions in the pathway bacterial outer membrane biogenesis; LPS lipid A biosynthesis. Catalyzes the N-acylation of UDP-3-O-acylglucosamine using 3-hydroxyacyl-ACP as the acyl donor. Is involved in the biosynthesis of lipid A, a phosphorylated glycolipid that anchors the lipopolysaccharide to the outer membrane of the cell. This Rickettsia canadensis (strain McKiel) protein is UDP-3-O-acylglucosamine N-acyltransferase.